A 577-amino-acid polypeptide reads, in one-letter code: Leucine-rich repeat protein soc-2 homolog (577 aa).

2 stretches are compositionally biased toward basic and acidic residues: residues 1–10 and 33–48; these read MRRTKGRTDS and STAHKSDKKHDPEAKK. Positions 1-71 are disordered; the sequence is MRRTKGRTDS…PTVKKRSTPS (71 aa). LRR repeat units lie at residues 87–109, 110–131, 133–155, 156–177, 179–201, 202–223, 225–246, 248–269, 271–292, 294–315, 318–339, 342–363, 366–387, 389–410, 412–434, 435–456, 458–479, 481–502, 504–526, and 528–549; these read GATRLDLSKAAVTVLPKELKELT, SLRELYLYGNRIAVLPPEVGLL, NLETLALSENNLTTLPDNLVKLT, KLKVLDLRHNKIKEIPDVIYKL, TLTTLYLRFNRISVVESGIGNLK, LLERLSLRENKIKILPRVIGQL, HLVTLDISHNHIENLPAEIGNC, HMTSLDLQHNDIPSLPDSIGRL, AMTRLGLRYNQLSSLPDSLANC, GIDEFNIEGNNIAELPEKLLSS, NLTSLTLSRNKFEVFPAGPPKQ, QVNTFIMEHNRMQKIPFGVFNK, YLSKLNVKDNQLTSLPLDFGSW, SLVELNVATNQISKLPEDIQWL, NLEVLILSNNLLKKLPRGIGALR, KLRVLDIEENKLESIPTEIEYL, SLERLVLQSNCLGSLPRSIGYL, SVTYLSVGENELVSVPQEIGNM, SLEQLYLNDNENLQSLPYELVLC, and SLQIMSIENCPLSALPSQIVAG.

It belongs to the SHOC2 family.

Acts as a Ras effector and participates in MAPK pathway activation. Probably acts as a scaffolding protein in a protein phosphatase complex that specifically dephosphorylates Raf kinase and stimulate Raf activity at specialized signaling complexes upon Ras activation. The polypeptide is Leucine-rich repeat protein soc-2 homolog (Nematostella vectensis (Starlet sea anemone)).